Consider the following 479-residue polypeptide: Aspartyl/glutamyl-tRNA(Asn/Gln) amidotransferase subunit B (479 aa).

Belongs to the GatB/GatE family. GatB subfamily. As to quaternary structure, heterotrimer of A, B and C subunits.

It carries out the reaction L-glutamyl-tRNA(Gln) + L-glutamine + ATP + H2O = L-glutaminyl-tRNA(Gln) + L-glutamate + ADP + phosphate + H(+). The catalysed reaction is L-aspartyl-tRNA(Asn) + L-glutamine + ATP + H2O = L-asparaginyl-tRNA(Asn) + L-glutamate + ADP + phosphate + 2 H(+). Its function is as follows. Allows the formation of correctly charged Asn-tRNA(Asn) or Gln-tRNA(Gln) through the transamidation of misacylated Asp-tRNA(Asn) or Glu-tRNA(Gln) in organisms which lack either or both of asparaginyl-tRNA or glutaminyl-tRNA synthetases. The reaction takes place in the presence of glutamine and ATP through an activated phospho-Asp-tRNA(Asn) or phospho-Glu-tRNA(Gln). In Halorhodospira halophila (strain DSM 244 / SL1) (Ectothiorhodospira halophila (strain DSM 244 / SL1)), this protein is Aspartyl/glutamyl-tRNA(Asn/Gln) amidotransferase subunit B.